A 113-amino-acid chain; its full sequence is Hydrogenase maturation factor HypA (113 aa).

Residue histidine 2 coordinates Ni(2+). Zn(2+) is bound by residues cysteine 73, cysteine 76, cysteine 89, and cysteine 92.

This sequence belongs to the HypA/HybF family.

In terms of biological role, involved in the maturation of [NiFe] hydrogenases. Required for nickel insertion into the metal center of the hydrogenase. In Rhodopseudomonas palustris (strain BisA53), this protein is Hydrogenase maturation factor HypA.